The chain runs to 299 residues: ATP phosphoribosyltransferase (299 aa).

This sequence belongs to the ATP phosphoribosyltransferase family. Long subfamily. Equilibrium between an active dimeric form, an inactive hexameric form and higher aggregates. Interconversion between the various forms is largely reversible and is influenced by the natural substrates and inhibitors of the enzyme. Mg(2+) serves as cofactor.

Its subcellular location is the cytoplasm. It catalyses the reaction 1-(5-phospho-beta-D-ribosyl)-ATP + diphosphate = 5-phospho-alpha-D-ribose 1-diphosphate + ATP. It participates in amino-acid biosynthesis; L-histidine biosynthesis; L-histidine from 5-phospho-alpha-D-ribose 1-diphosphate: step 1/9. Feedback inhibited by histidine. In terms of biological role, catalyzes the condensation of ATP and 5-phosphoribose 1-diphosphate to form N'-(5'-phosphoribosyl)-ATP (PR-ATP). Has a crucial role in the pathway because the rate of histidine biosynthesis seems to be controlled primarily by regulation of HisG enzymatic activity. The sequence is that of ATP phosphoribosyltransferase from Salmonella dublin (strain CT_02021853).